The chain runs to 489 residues: N-succinylglutamate 5-semialdehyde dehydrogenase (489 aa).

223-228 contacts NAD(+); the sequence is GSSNTG. Catalysis depends on residues Glu246 and Cys280.

The protein belongs to the aldehyde dehydrogenase family. AstD subfamily.

The enzyme catalyses N-succinyl-L-glutamate 5-semialdehyde + NAD(+) + H2O = N-succinyl-L-glutamate + NADH + 2 H(+). It functions in the pathway amino-acid degradation; L-arginine degradation via AST pathway; L-glutamate and succinate from L-arginine: step 4/5. Its function is as follows. Catalyzes the NAD-dependent reduction of succinylglutamate semialdehyde into succinylglutamate. The chain is N-succinylglutamate 5-semialdehyde dehydrogenase from Idiomarina loihiensis (strain ATCC BAA-735 / DSM 15497 / L2-TR).